A 447-amino-acid polypeptide reads, in one-letter code: Trigger factor (447 aa).

The 86-residue stretch at 164-249 (GNQVTFDFEG…VKLVEKSKLP (86 aa)) folds into the PPIase FKBP-type domain.

This sequence belongs to the FKBP-type PPIase family. Tig subfamily.

It localises to the cytoplasm. The catalysed reaction is [protein]-peptidylproline (omega=180) = [protein]-peptidylproline (omega=0). Involved in protein export. Acts as a chaperone by maintaining the newly synthesized protein in an open conformation. Functions as a peptidyl-prolyl cis-trans isomerase. This Psychrobacter cryohalolentis (strain ATCC BAA-1226 / DSM 17306 / VKM B-2378 / K5) protein is Trigger factor.